Consider the following 451-residue polypeptide: 23S rRNA (uracil(1939)-C(5))-methyltransferase RlmD (451 aa).

Positions 20–78 constitute a TRAM domain; it reads QIPAGKKQRLTIERLSDDGRGIAFLEGKTWFVAGSLAGEEVEARVLNARGKVVEARTER. [4Fe-4S] cluster contacts are provided by Cys91, Cys97, Cys100, and Cys179. Residues Gln283, Phe312, Asn317, Glu333, Asp360, and Asp381 each contribute to the S-adenosyl-L-methionine site. Cys407 functions as the Nucleophile in the catalytic mechanism.

Belongs to the class I-like SAM-binding methyltransferase superfamily. RNA M5U methyltransferase family. RlmD subfamily.

It carries out the reaction uridine(1939) in 23S rRNA + S-adenosyl-L-methionine = 5-methyluridine(1939) in 23S rRNA + S-adenosyl-L-homocysteine + H(+). In terms of biological role, catalyzes the formation of 5-methyl-uridine at position 1939 (m5U1939) in 23S rRNA. The chain is 23S rRNA (uracil(1939)-C(5))-methyltransferase RlmD from Pseudomonas savastanoi pv. phaseolicola (strain 1448A / Race 6) (Pseudomonas syringae pv. phaseolicola (strain 1448A / Race 6)).